The chain runs to 155 residues: S-ribosylhomocysteine lyase (155 aa).

Fe cation is bound by residues histidine 58, histidine 62, and cysteine 125.

The protein belongs to the LuxS family. In terms of assembly, homodimer. The cofactor is Fe cation.

The catalysed reaction is S-(5-deoxy-D-ribos-5-yl)-L-homocysteine = (S)-4,5-dihydroxypentane-2,3-dione + L-homocysteine. Involved in the synthesis of autoinducer 2 (AI-2) which is secreted by bacteria and is used to communicate both the cell density and the metabolic potential of the environment. The regulation of gene expression in response to changes in cell density is called quorum sensing. Catalyzes the transformation of S-ribosylhomocysteine (RHC) to homocysteine (HC) and 4,5-dihydroxy-2,3-pentadione (DPD). This Helicobacter pylori (strain P12) protein is S-ribosylhomocysteine lyase.